The chain runs to 357 residues: DNA integrity scanning protein DisA (357 aa).

The 139-residue stretch at 8–146 (VKSMINILQL…GNLRYTLKDI (139 aa)) folds into the DAC domain. ATP contacts are provided by residues Gly75, Leu93, and 106–110 (MRHRT).

This sequence belongs to the DisA family. Homooctamer. Mg(2+) is required as a cofactor.

It carries out the reaction 2 ATP = 3',3'-c-di-AMP + 2 diphosphate. Functionally, participates in a DNA-damage check-point that is active prior to asymmetric division when DNA is damaged. DisA forms globular foci that rapidly scan along the chromosomes during sporulation, searching for lesions. When a lesion is present, DisA pauses at the lesion site. This triggers a cellular response that culminates in a temporary block in sporulation initiation. In terms of biological role, also has diadenylate cyclase activity, catalyzing the condensation of 2 ATP molecules into cyclic di-AMP (c-di-AMP). c-di-AMP acts as a signaling molecule that couples DNA integrity with progression of sporulation. The rise in c-di-AMP level generated by DisA while scanning the chromosome, operates as a positive signal that advances sporulation; upon encountering a lesion, the DisA focus arrests at the damaged site and halts c-di-AMP synthesis. In Bacillus cereus (strain G9842), this protein is DNA integrity scanning protein DisA.